Consider the following 264-residue polypeptide: MSEASHLQERCARQFDVVTLFPEMFDALTKFGISARAQERGIYELALWNPRDFTTDNYRTIDDRPYGGGPGMVMLAEPLEKAIAAAKVRQQSRGVENPRVIHLSPQGVPLKHEHVMQLKDVPGLILLASRYEGVDERLLSTLVDEEYSIGDYVLSGGEIPAMAILDAIIRQLPGSLGDAGSAEEDSFADGLLDCPHYTRPEVYAGQKVPEVLLSGNHAKIKRWRLKQSLARTRARRPDLLAARPLTKEESRLLMEIEQEQDSHN.

149–154 serves as a coordination point for S-adenosyl-L-methionine; that stretch reads IGDYVL.

Belongs to the RNA methyltransferase TrmD family. In terms of assembly, homodimer.

Its subcellular location is the cytoplasm. The enzyme catalyses guanosine(37) in tRNA + S-adenosyl-L-methionine = N(1)-methylguanosine(37) in tRNA + S-adenosyl-L-homocysteine + H(+). Its function is as follows. Specifically methylates guanosine-37 in various tRNAs. The protein is tRNA (guanine-N(1)-)-methyltransferase of Methylobacillus flagellatus (strain ATCC 51484 / DSM 6875 / VKM B-1610 / KT).